A 342-amino-acid polypeptide reads, in one-letter code: Immune-associated nucleotide-binding protein 9 (342 aa).

The AIG1-type G domain occupies 22-229 (NPKRTLVLVG…YSDELFHELQ (208 aa)). Residues 31–38 (GRTGNGKS) form a G1 region. GTP is bound by residues 31-39 (GRTGNGKSA) and Ser52. The interval 58–62 (GVTST) is G2. A G3 region spans residues 80–83 (DTPG). The segment at 149–152 (TGGD) is G4. The G5 stretch occupies residues 188-190 (NNK). Position 189 (Asn189) interacts with GTP. Positions 276–342 (ETKLRDTAKR…QKKLGKCINL (67 aa)) form a coiled coil.

The protein belongs to the TRAFAC class TrmE-Era-EngA-EngB-Septin-like GTPase superfamily. AIG1/Toc34/Toc159-like paraseptin GTPase family. IAN subfamily. In terms of tissue distribution, mainly expressed in leaves.

This is Immune-associated nucleotide-binding protein 9 from Arabidopsis thaliana (Mouse-ear cress).